Consider the following 524-residue polypeptide: Thioredoxin reductase 2, mitochondrial (524 aa).

A mitochondrion-targeting transit peptide spans Met-1–Gly-36. An FAD-binding site is contributed by Asp-41–Tyr-70. Cys-86 and Cys-91 are joined by a disulfide. N6-succinyllysine is present on residues Lys-175 and Lys-329. His-497 functions as the Proton acceptor in the catalytic mechanism. The segment at residues Cys-522–Sec-523 is a cross-link (cysteinyl-selenocysteine (Cys-Sec)). A non-standard amino acid (selenocysteine) is located at residue Sec-523.

Belongs to the class-I pyridine nucleotide-disulfide oxidoreductase family. Homodimer. It depends on FAD as a cofactor. Highly expressed in the prostate, ovary, liver, testis, uterus, colon and small intestine. Intermediate levels in brain, skeletal muscle, heart and spleen. Low levels in placenta, pancreas, thymus and peripheral blood leukocytes. According to PubMed:10608886, high levels in kidney, whereas according to PubMed:9923614, levels are low. High expression is observed in the adrenal cortex.

The protein resides in the mitochondrion. It catalyses the reaction [thioredoxin]-dithiol + NADP(+) = [thioredoxin]-disulfide + NADPH + H(+). In terms of biological role, involved in the control of reactive oxygen species levels and the regulation of mitochondrial redox homeostasis. Maintains thioredoxin in a reduced state. May play a role in redox-regulated cell signaling. The sequence is that of Thioredoxin reductase 2, mitochondrial from Homo sapiens (Human).